The following is a 61-amino-acid chain: Small ribosomal subunit protein uS14 (61 aa).

Cysteine 24, cysteine 27, cysteine 40, and cysteine 43 together coordinate Zn(2+).

Belongs to the universal ribosomal protein uS14 family. Zinc-binding uS14 subfamily. In terms of assembly, part of the 30S ribosomal subunit. Contacts proteins S3 and S10. It depends on Zn(2+) as a cofactor.

Binds 16S rRNA, required for the assembly of 30S particles and may also be responsible for determining the conformation of the 16S rRNA at the A site. The protein is Small ribosomal subunit protein uS14 of Alkaliphilus oremlandii (strain OhILAs) (Clostridium oremlandii (strain OhILAs)).